A 91-amino-acid polypeptide reads, in one-letter code: Protein LURE 1.3 (91 aa).

An N-terminal signal peptide occupies residues 1-20; sequence MKLPFIFLITLLIFVSSCTS. N-linked (GlcNAc...) asparagine glycosylation is present at Asn24. 3 disulfide bridges follow: Cys59–Cys76, Cys62–Cys83, and Cys66–Cys85. A PRK6 binding region spans residues 68-88; it reads RRGKYIRTCSFERKLCRCSIS.

The protein belongs to the DEFL family. Binds to PRK6 LRRs. Expressed in the pistil. Detected exclusively in the synergid cells.

The protein localises to the secreted. Functionally, pollen tube attractants guiding pollen tubes to the ovular micropyle. Attracts pollen tubes from both A.thaliana and A.lyrata. This Arabidopsis thaliana (Mouse-ear cress) protein is Protein LURE 1.3.